A 364-amino-acid polypeptide reads, in one-letter code: UDP-N-acetylglucosamine--N-acetylmuramyl-(pentapeptide) pyrophosphoryl-undecaprenol N-acetylglucosamine transferase (364 aa).

UDP-N-acetyl-alpha-D-glucosamine contacts are provided by residues 15-17 (TGG), N123, R164, S191, and Q286.

The protein belongs to the glycosyltransferase 28 family. MurG subfamily.

It is found in the cell inner membrane. The catalysed reaction is di-trans,octa-cis-undecaprenyl diphospho-N-acetyl-alpha-D-muramoyl-L-alanyl-D-glutamyl-meso-2,6-diaminopimeloyl-D-alanyl-D-alanine + UDP-N-acetyl-alpha-D-glucosamine = di-trans,octa-cis-undecaprenyl diphospho-[N-acetyl-alpha-D-glucosaminyl-(1-&gt;4)]-N-acetyl-alpha-D-muramoyl-L-alanyl-D-glutamyl-meso-2,6-diaminopimeloyl-D-alanyl-D-alanine + UDP + H(+). It functions in the pathway cell wall biogenesis; peptidoglycan biosynthesis. In terms of biological role, cell wall formation. Catalyzes the transfer of a GlcNAc subunit on undecaprenyl-pyrophosphoryl-MurNAc-pentapeptide (lipid intermediate I) to form undecaprenyl-pyrophosphoryl-MurNAc-(pentapeptide)GlcNAc (lipid intermediate II). The sequence is that of UDP-N-acetylglucosamine--N-acetylmuramyl-(pentapeptide) pyrophosphoryl-undecaprenol N-acetylglucosamine transferase from Prochlorococcus marinus (strain MIT 9515).